Reading from the N-terminus, the 141-residue chain is UPF0225 protein Rmet_0111 (141 aa).

This sequence belongs to the UPF0225 family.

The polypeptide is UPF0225 protein Rmet_0111 (Cupriavidus metallidurans (strain ATCC 43123 / DSM 2839 / NBRC 102507 / CH34) (Ralstonia metallidurans)).